We begin with the raw amino-acid sequence, 162 residues long: ATP synthase subunit b (162 aa).

The helical transmembrane segment at 6 to 25 (TLFTLVTFLVLMLAVGKVAW) threads the bilayer.

The protein belongs to the ATPase B chain family. In terms of assembly, F-type ATPases have 2 components, F(1) - the catalytic core - and F(0) - the membrane proton channel. F(1) has five subunits: alpha(3), beta(3), gamma(1), delta(1), epsilon(1). F(0) has three main subunits: a(1), b(2) and c(10-14). The alpha and beta chains form an alternating ring which encloses part of the gamma chain. F(1) is attached to F(0) by a central stalk formed by the gamma and epsilon chains, while a peripheral stalk is formed by the delta and b chains.

It is found in the cell membrane. Its function is as follows. F(1)F(0) ATP synthase produces ATP from ADP in the presence of a proton or sodium gradient. F-type ATPases consist of two structural domains, F(1) containing the extramembraneous catalytic core and F(0) containing the membrane proton channel, linked together by a central stalk and a peripheral stalk. During catalysis, ATP synthesis in the catalytic domain of F(1) is coupled via a rotary mechanism of the central stalk subunits to proton translocation. Component of the F(0) channel, it forms part of the peripheral stalk, linking F(1) to F(0). In Lacticaseibacillus casei (strain BL23) (Lactobacillus casei), this protein is ATP synthase subunit b.